Consider the following 167-residue polypeptide: Large ribosomal subunit protein uL10 (167 aa).

Belongs to the universal ribosomal protein uL10 family. Part of the ribosomal stalk of the 50S ribosomal subunit. The N-terminus interacts with L11 and the large rRNA to form the base of the stalk. The C-terminus forms an elongated spine to which L12 dimers bind in a sequential fashion forming a multimeric L10(L12)X complex.

Forms part of the ribosomal stalk, playing a central role in the interaction of the ribosome with GTP-bound translation factors. This is Large ribosomal subunit protein uL10 from Cytophaga hutchinsonii (strain ATCC 33406 / DSM 1761 / CIP 103989 / NBRC 15051 / NCIMB 9469 / D465).